The chain runs to 447 residues: Methylenetetrahydrofolate--tRNA-(uracil-5-)-methyltransferase TrmFO (447 aa).

10–15 (GAGLAG) serves as a coordination point for FAD.

The protein belongs to the MnmG family. TrmFO subfamily. The cofactor is FAD.

The protein resides in the cytoplasm. It catalyses the reaction uridine(54) in tRNA + (6R)-5,10-methylene-5,6,7,8-tetrahydrofolate + NADH + H(+) = 5-methyluridine(54) in tRNA + (6S)-5,6,7,8-tetrahydrofolate + NAD(+). The enzyme catalyses uridine(54) in tRNA + (6R)-5,10-methylene-5,6,7,8-tetrahydrofolate + NADPH + H(+) = 5-methyluridine(54) in tRNA + (6S)-5,6,7,8-tetrahydrofolate + NADP(+). Its function is as follows. Catalyzes the folate-dependent formation of 5-methyl-uridine at position 54 (M-5-U54) in all tRNAs. The chain is Methylenetetrahydrofolate--tRNA-(uracil-5-)-methyltransferase TrmFO from Lactococcus lactis subsp. lactis (strain IL1403) (Streptococcus lactis).